The chain runs to 611 residues: Muscarinic acetylcholine receptor gar-3 (611 aa).

The Extracellular segment spans residues 1-67 (MQSSSLGNAD…LLGEEGRMVM (67 aa)). Asn-28 and Asn-33 each carry an N-linked (GlcNAc...) asparagine glycan. A helical membrane pass occupies residues 68 to 88 (IVVIGAMFALVTSLGNLMVMV). Topologically, residues 89–101 (SFKIDKQLQTISN) are cytoplasmic. Residues 102 to 122 (YFLFSLAVADIAIGVISIPMF) traverse the membrane as a helical segment. Topologically, residues 123–140 (TYYTAIQKWDLGYTMCQF) are extracellular. A disulfide bridge connects residues Cys-138 and Cys-218. The chain crosses the membrane as a helical span at residues 141–161 (WLCIDYLMSNASVLNLLLISF). Topologically, residues 162 to 181 (DRYFSVTRPLSYRPRRTTKK) are cytoplasmic. A helical membrane pass occupies residues 182-202 (ALTMIACTYIISLILWPPWII). At 203–227 (SWPYIEGKFTAEPGTCVVQFLQTNP) the chain is on the extracellular side. Residues 228–248 (YVTVGTAVAAFYLPVTIMCIL) form a helical membrane-spanning segment. Topologically, residues 249 to 525 (YTRVYWETQK…RKQESKAAKT (277 aa)) are cytoplasmic. 4 disordered regions span residues 299 to 364 (RRSM…SSEA), 377 to 432 (SHFA…NNNS), 446 to 477 (SRPS…NSEI), and 500 to 519 (FSSQ…RKQE). Over residues 307 to 317 (SSTSIIKSSGS) the composition is skewed to low complexity. The span at 503 to 519 (QERKSEKEQRKNERKQE) shows a compositional bias: basic and acidic residues. A helical transmembrane segment spans residues 526-546 (LSAILCAFIATWTPYNLIVCW). Topologically, residues 547 to 557 (EAFFPNTVPNV) are extracellular. Residues 558 to 578 (LWTFSYFLCYINSTINPLCYA) form a helical membrane-spanning segment. Residues 579-611 (LCNARFRHTYMRILRCKFKAERPTMNQGYVRRN) lie on the Cytoplasmic side of the membrane.

The protein belongs to the G-protein coupled receptor 1 family. Muscarinic acetylcholine receptor subfamily.

The protein resides in the cell membrane. Functionally, the muscarinic acetylcholine receptor mediates various cellular responses, including inhibition of adenylate cyclase, breakdown of phosphoinositides and modulation of potassium channels through the action of G proteins. Primary transducing effect is Pi turnover. Enhances the release of the neurotransmitter acetlycholine in cholinergic motor neurons, which in turn positively feeds back to depolarize body wall muscles and allows for the maintenance of normal body posture and locomotion. The protein is Muscarinic acetylcholine receptor gar-3 (gar-3) of Caenorhabditis elegans.